Here is a 208-residue protein sequence, read N- to C-terminus: uncharacterized protein (208 aa).

A disordered region spans residues 126–151 (VGSGSGSDSSSGSTSSPNTVNNYNSD). The segment covering 131-141 (GSDSSSGSTSS) has biased composition (low complexity).

This is an uncharacterized protein from Dictyostelium discoideum (Social amoeba).